A 317-amino-acid chain; its full sequence is NAD kinase (317 aa).

Aspartate 82 (proton acceptor) is an active-site residue. NAD(+) contacts are provided by residues 82–83 (DG), arginine 87, 157–158 (NE), aspartate 187, and 198–203 (TAYAFS).

It belongs to the NAD kinase family. The cofactor is a divalent metal cation.

The protein localises to the cytoplasm. The catalysed reaction is NAD(+) + ATP = ADP + NADP(+) + H(+). Involved in the regulation of the intracellular balance of NAD and NADP, and is a key enzyme in the biosynthesis of NADP. Catalyzes specifically the phosphorylation on 2'-hydroxyl of the adenosine moiety of NAD to yield NADP. The sequence is that of NAD kinase from Corynebacterium diphtheriae (strain ATCC 700971 / NCTC 13129 / Biotype gravis).